The primary structure comprises 386 residues: MPLIAISYSHGKLSILNQLFLPHQTTYDPIYSACDAWHAIHDMRVRGAPAIAIVAALSVAVELYDLIQKGKLSDQAKEVEIFIREKLEYIASSRPTAVNLVEAAGRLGKIVVARSCGEGVTGREVAEEYIRAAEKMLEDDVKDNRGIGEFGAKWIMKQAIDGAEGEGEGKGKVAVLTHCNTGSLATAGYGTALGVIRSLHAANSLKHAYCTETRPYNQGSRLTAYELVHDNIPATLITDSMAAALLAHKSAGVGAIVVGADRVAANGDTANKIGTYGLAVLAKHHGVKFLVAAPRTTIDMNTKSGEGIAIEERPRQEMTRIRGPRVGGEQDGLGAMETITVAADGIDVWNPAFDVTPASLIDGIITEIGVVEKDRDGEFHLERVFE.

Residue D261 is the Proton donor of the active site.

The protein belongs to the eIF-2B alpha/beta/delta subunits family. MtnA subfamily.

Its subcellular location is the cytoplasm. The protein localises to the nucleus. It carries out the reaction 5-(methylsulfanyl)-alpha-D-ribose 1-phosphate = 5-(methylsulfanyl)-D-ribulose 1-phosphate. Its pathway is amino-acid biosynthesis; L-methionine biosynthesis via salvage pathway; L-methionine from S-methyl-5-thio-alpha-D-ribose 1-phosphate: step 1/6. In terms of biological role, catalyzes the interconversion of methylthioribose-1-phosphate (MTR-1-P) into methylthioribulose-1-phosphate (MTRu-1-P). This chain is Methylthioribose-1-phosphate isomerase, found in Paracoccidioides brasiliensis (strain Pb03).